A 519-amino-acid polypeptide reads, in one-letter code: Membrane-bound glycerophospholipid O-acyltransferase 2 (519 aa).

Transmembrane regions (helical) follow at residues 22–42 (PIDQ…AVWF), 61–81 (TLLG…HFLV), 88–108 (CIMI…FALG), 184–204 (FMGI…FIEG), 236–256 (LLVC…LPVE), and 288–305 (YFAW…GFGF). Active-site residues include Asn-341 and His-372. A run of 3 helical transmembrane segments spans residues 365–385 (FFLS…FLTG), 415–435 (IITW…FVLL), and 443–463 (FYRS…LLLP).

The protein belongs to the membrane-bound acyltransferase family.

Its subcellular location is the endoplasmic reticulum membrane. The catalysed reaction is a 1-acyl-sn-glycero-3-phosphocholine + an acyl-CoA = a 1,2-diacyl-sn-glycero-3-phosphocholine + CoA. It catalyses the reaction a 1-acyl-sn-glycero-3-phosphoethanolamine + an acyl-CoA = a 1,2-diacyl-sn-glycero-3-phosphoethanolamine + CoA. The enzyme catalyses a 1-acyl-sn-glycero-3-phosphate + an acyl-CoA = a 1,2-diacyl-sn-glycero-3-phosphate + CoA. It carries out the reaction (9Z)-hexadecenoyl-CoA + 1-hexadecanoyl-sn-glycero-3-phosphocholine = 1-hexadecanoyl-2-(9Z-hexadecenoyl)-sn-glycero-3-phosphocholine + CoA. The catalysed reaction is 1-hexadecanoyl-sn-glycero-3-phosphoethanolamine + (9Z)-octadecenoyl-CoA = 1-hexadecanoyl-2-(9Z-octadecenoyl)-sn-glycero-3-phosphoethanolamine + CoA. It catalyses the reaction 1-hexadecanoyl-sn-glycero-3-phosphoethanolamine + (9Z)-hexadecenoyl-CoA = 1-hexadecanoyl-2-(9Z)-hexadecenoyl-sn-glycero-3-phosphoethanolamine + CoA. The enzyme catalyses 1-(9Z-octadecenoyl)-sn-glycero-3-phospho-L-serine + hexadecanoyl-CoA = 1-(9Z)-octadecenoyl-2-hexadecanoyl-sn-glycero-3-phosphoserine + CoA. It carries out the reaction (9Z,12Z)-octadecadienoyl-CoA + 1-hexadecanoyl-sn-glycero-3-phosphocholine = 1-hexadecanoyl-2-(9Z,12Z-octadecadienoyl)-sn-glycero-3-phosphocholine + CoA. The catalysed reaction is 1-hexadecanoyl-sn-glycero-3-phosphocholine + (9Z)-octadecenoyl-CoA = 1-hexadecanoyl-2-(9Z-octadecenoyl)-sn-glycero-3-phosphocholine + CoA. It catalyses the reaction 1-hexadecanoyl-sn-glycero-3-phosphate + (9Z)-hexadecenoyl-CoA = 1-hexadecanoyl-2-[(9Z)-hexadec-9-enoyl]-sn-glycero-3-phosphate + CoA. The enzyme catalyses 1-hexadecanoyl-sn-glycero-3-phosphate + (9Z)-octadecenoyl-CoA = 1-hexadecanoyl-2-(9Z-octadecenoyl)-sn-glycero-3-phosphate + CoA. It carries out the reaction a 1-O-(1Z-alkenyl)-sn-glycero-3-phosphocholine + (9Z)-octadecenoyl-CoA = 1-O-(1Z)-alkenyl-2-(9Z)-octadecenoyl-sn-glycero-3-phosphocholine + CoA. The catalysed reaction is a 1-O-(1Z-alkenyl)-sn-glycero-3-phosphoethanolamine + (9Z)-octadecenoyl-CoA = 1-O-(1Z)-alkenyl-2-(9Z)-octadecenoyl-sn-glycero-3-phosphoethanolamine + CoA. It catalyses the reaction 1-octadecanoyl-sn-glycero-3-phosphoethanolamine + (9Z)-octadecenoyl-CoA = 1-octadecanoyl-2-(9Z-octadecenoyl)-sn-glycero-3-phosphoethanolamine + CoA. The enzyme catalyses 1-octadecanoyl-sn-glycero-3-phosphocholine + (9Z)-octadecenoyl-CoA = 1-octadecanoyl-2-(9Z-octadecenoyl)-sn-glycero-3-phosphocholine + CoA. It carries out the reaction 1-(9Z-octadecenoyl)-sn-glycero-3-phosphoethanolamine + (9Z)-octadecenoyl-CoA = 1,2-di-(9Z-octadecenoyl)-sn-glycero-3-phosphoethanolamine + CoA. The protein operates within lipid metabolism; phospholipid metabolism. With respect to regulation, partially inhibited by thimerosal. Acyltransferase which catalyzes the transfer of an acyl group from an acyl-CoA to a lysophospholipid leading to the production of a phospholipid and participates in the reacylation step of the phospholipid remodeling pathway also known as the Lands cycle. May catalyze preferentially the acylation of lysophosphatidylethanolamine (1-acyl-sn-glycero-3-phosphoethanolamine or LPE) and lysophosphatidic acid (LPA) and to a lesser extend lysophosphatidylcholine (LPC) and lysophosphatidylserine (LPS). Prefers oleoyl-CoA as the acyl donor. May be involved in chondrocyte differentiation. The chain is Membrane-bound glycerophospholipid O-acyltransferase 2 from Rattus norvegicus (Rat).